Here is a 281-residue protein sequence, read N- to C-terminus: MTNSSSRSVRAGSVVRTVCRHRGGRSAMVQDMVAAEMPVAFIYNGVQFAVMMATPEDLEDFALGFSLSEGIVDHAQDLRVIAVETFLEGASLQIDIPPERAAALDQRRRNLDGRSGCGVCGNESIEAVLRVPPVLNSSLQIDVDALAHALDALHARQPIAAQTGAVHAAGWADAQGNVQLVREDVGRHNALDKLIGALARARIDASQGFAVVTSRASYEMAMKATQARIPLLAAISAPTALAISLADSAGLTLIGFARNHDCVVYSHPQRLNLGVAVGETA.

Cysteine 117 (cysteine persulfide intermediate) is an active-site residue.

This sequence belongs to the FdhD family.

Its subcellular location is the cytoplasm. In terms of biological role, required for formate dehydrogenase (FDH) activity. Acts as a sulfur carrier protein that transfers sulfur from IscS to the molybdenum cofactor prior to its insertion into FDH. The polypeptide is Sulfur carrier protein FdhD (Xanthomonas oryzae pv. oryzae (strain MAFF 311018)).